The sequence spans 651 residues: Probable potassium transport system protein Kup (651 aa).

Transmembrane regions (helical) follow at residues 41–61 (LVLG…IYAF), 82–102 (VVSL…VLFV), 130–150 (LILG…VITP), 163–183 (IVAP…LVTL), 194–214 (VAIV…ASGL), 235–255 (FLTV…LAMT), 276–296 (WLWI…AFIL), 309–329 (MIPS…TVIA), 366–386 (IYIP…VLGF), 395–415 (AYGI…YIVM), 426–446 (ALPI…ANII), and 450–470 (EGGW…WTWV).

This sequence belongs to the HAK/KUP transporter (TC 2.A.72) family.

Its subcellular location is the cell inner membrane. The catalysed reaction is K(+)(in) + H(+)(in) = K(+)(out) + H(+)(out). Transport of potassium into the cell. Likely operates as a K(+):H(+) symporter. This chain is Probable potassium transport system protein Kup, found in Brucella melitensis biotype 2 (strain ATCC 23457).